The following is a 398-amino-acid chain: Trans-2-enoyl-CoA reductase [NADH] (398 aa).

Residues 47–52 (GASSGF), 74–75 (FE), 111–112 (DA), and 139–140 (LA) each bind NAD(+). Residue Tyr-225 coordinates substrate. The active-site Proton donor is the Tyr-235. Residues Lys-244 and 274 to 276 (IVT) each bind NAD(+).

Belongs to the TER reductase family. As to quaternary structure, monomer.

It catalyses the reaction a 2,3-saturated acyl-CoA + NAD(+) = a (2E)-enoyl-CoA + NADH + H(+). It participates in lipid metabolism; fatty acid biosynthesis. Its function is as follows. Involved in the fatty acid synthesis (FAS II). Catalyzes the reduction of a carbon-carbon double bond in an enoyl moiety that is covalently linked to a coenzyme A (CoA). This Clostridium beijerinckii (strain ATCC 51743 / NCIMB 8052) (Clostridium acetobutylicum) protein is Trans-2-enoyl-CoA reductase [NADH].